We begin with the raw amino-acid sequence, 829 residues long: Sodium/hydrogen exchanger 3 (829 aa).

A signal peptide spans 1-26 (MWHRALGPGWKLLLALALTSLQGARG). The Extracellular segment spans residues 27-46 (AEEEPSSDGSFQVVTFKWHH). The helical transmembrane segment at 47–69 (VQDPYIIALWILVASLAKIVFHL) threads the bilayer. Residues 70 to 77 (SHKVTSIV) lie on the Cytoplasmic side of the membrane. Residues 78–97 (PESALLIVLGLVLGGIVWAA) traverse the membrane as a helical segment. The Extracellular segment spans residues 98–106 (DHIASFTLT). The chain crosses the membrane as a helical span at residues 107–124 (PTLFFFYLLPPIVLDAGY). Residues 125–127 (FMP) are Cytoplasmic-facing. The chain crosses the membrane as a helical span at residues 128–163 (NRLFFGNLGTILLYAVIGTIWNAATTGLSLYGVFLS). Positions 133, 136, and 137 each coordinate a 1,2-diacyl-sn-glycero-3-phospho-(1D-myo-inositol). Residues 164–176 (GLMGELKIGLLDF) are Extracellular-facing. Residues 177–198 (LLFGSLIAAVDPVAVLAVFEEV) traverse the membrane as a helical segment. Topologically, residues 199-200 (HV) are cytoplasmic. A helical membrane pass occupies residues 201 to 232 (NEVLFIIVFGESLLNDAVTVVLYNVFESFVTL). Residues 233 to 239 (GGDAVTG) are Extracellular-facing. Residues 240–274 (VDCVKGIVSFFVVSLGGTLVGVIFAFLLSLVTRFT) traverse the membrane as a helical segment. At 275-276 (KH) the chain is on the cytoplasmic side. Residues 277–299 (VRIIEPGFVFVISYLSYLTSEML) traverse the membrane as a helical segment. At 300–301 (SL) the chain is on the extracellular side. Residues 302-318 (SSILAITFCGICCQKYV) traverse the membrane as a helical segment. The Cytoplasmic segment spans residues 319–325 (KANISEQ). The helical transmembrane segment at 326 to 354 (SATTVRYTMKMLASGAETIIFMFLGISAV) threads the bilayer. Topologically, residues 355 to 362 (NPDIWTWN) are extracellular. Residues 363 to 384 (TAFVLLTLVFISVYRAIGVVLQ) form a helical membrane-spanning segment. Residues 385–397 (TWILNRYRMVQLE) lie on the Cytoplasmic side of the membrane. Met393 provides a ligand contact to a 1,2-diacyl-sn-glycero-3-phospho-(1D-myo-inositol). The helical transmembrane segment at 398 to 421 (TIDQVVMSYGGLRGAVAYALVVLL) threads the bilayer. Topologically, residues 422-428 (DEKKVKE) are extracellular. A helical transmembrane segment spans residues 429-462 (KNLFVSTTLIVVFFTVIFQGLTIKPLVQWLKVKR). Residues 463–829 (SEHREPKLNE…QPAAPESTHM (367 aa)) are Cytoplasmic-facing. A 1,2-diacyl-sn-glycero-3-phospho-(1D-myo-inositol) contacts are provided by Gln492, Ile493, and His495. A phosphoserine mark is found at Ser550 and Ser558. The interval 571-585 (RPSTVEASVSYFLRE) is interaction with EZR. The interaction with NHERF4 stretch occupies residues 586–663 (NVSAVCLDMQ…RKRLESFKSA (78 aa)). Residues 587–691 (VSAVCLDMQS…AQKRRNSSIP (105 aa)) are interaction with AHCYL1. Residues Ser588 and Ser603 each carry the phosphoserine modification. Phosphoserine; by SGK1 is present on Ser659. A compositionally biased stretch (basic residues) spans 677–687 (YKRERAQKRRN). The interval 677-696 (YKRERAQKRRNSSIPNGKLP) is disordered. A phosphoserine mark is found at Ser714, Ser805, and Ser808.

Belongs to the monovalent cation:proton antiporter 1 (CPA1) transporter (TC 2.A.36) family. As to quaternary structure, homodimer. Found in the forms of complex and dynamic macromolecular complexes. Binds NHERF1 and NHERF2. Interacts with CHP1; this interaction increases trafficking and activity of SLC9A3 at the plasma membrane. Interacts with CHP2 and SHANK2. Interacts with PDZK1 (via C-terminal PDZ domain). Interacts with NHERF4 and interactions decrease in response to elevated calcium ion levels. Interacts with AHCYL1; the interaction is required for SLC9A3 activity. Interacts with EZR; interaction targets SLC9A3 to the apical membrane. Interacts with SNX27 (via PDZ domains); directs SLC9A3 membrane insertion from early endosomes to the plasma membrane. Phosphorylated by PKA, which inhibits activity. Phosphorylation at Ser-659 by SGK1 is associated with increased abundance at the cell membrane. Phosphorylation at Ser-714 by CSNK2A1 regulates SLC9A3 activity through the formation of multiple signaling complexes.

It localises to the apical cell membrane. Its subcellular location is the cell membrane. The protein resides in the recycling endosome membrane. The protein localises to the early endosome membrane. It carries out the reaction Na(+)(in) + H(+)(out) = Na(+)(out) + H(+)(in). Its activity is regulated as follows. Seems to switch between active and inactive modes in response to various stimuli. Activated directly or indirectly by membrane phosphatidylinositol (PIs). Regulated by a variety of auxiliary proteins, which facilitate the maturation, cell surface expression and function of the transporter. Inhibited specifically by the drug tenapanor. In terms of biological role, plasma membrane Na(+)/H(+) antiporter. Exchanges intracellular H(+) ions for extracellular Na(+) in 1:1 stoichiometry, playing a key role in salt and fluid absorption and pH homeostasis. Major apical Na(+)/H(+) exchanger in kidney and intestine playing an important role in renal and intestine Na(+) absorption and blood pressure regulation. The polypeptide is Sodium/hydrogen exchanger 3 (Mus musculus (Mouse)).